Here is a 271-residue protein sequence, read N- to C-terminus: MNFQSKFLTRSQSLKSLLCVGLDPDYCKLPEIIKRSPEPLVHFCREIIDATAPYAVAYKPNIAFFEVFGSSGIRQFEKVIGHLKNNYPQIPIVADIKRGDLDNTARQYARYYFGDLQVDSLTLSPYMGLDTLRPFLEYQDHLVFWLCLTSSPDSIQFQKKRFSETGRTLYEEVAYVANSISPLNLGFVVGATNTYELEILRKQNPDRIFLIPGFGAQGAKLDDLLPVCGRYSLINSSRGIHFASDGLDFAARANQEAEKIHNAMQARFVFL.

Lys-97 serves as the catalytic Proton donor.

This sequence belongs to the OMP decarboxylase family. Type 2 subfamily.

It catalyses the reaction orotidine 5'-phosphate + H(+) = UMP + CO2. Its pathway is pyrimidine metabolism; UMP biosynthesis via de novo pathway; UMP from orotate: step 2/2. The polypeptide is Orotidine 5'-phosphate decarboxylase (Leptospira borgpetersenii serovar Hardjo-bovis (strain JB197)).